A 1325-amino-acid polypeptide reads, in one-letter code: MNRRYVFSLSAGLLASSCMGAIMPVPVARAQQASTAMTGAQATGGTAAPRQILLQQARFWLQQQQYDNARQALQNAQRIAPDAPDVLEVQGEYQTAMGNREAAADTLRHLQEVAPGSVAANSLSDLLHERSISTGDLSHVRSLAASGHSAEAVAGYQKLFNGGRPPHSLAIEYYQTMAGVPADWDQARAGLAGLVAANPQDYRAQLAFAQTLTYNTSTRMEGLARLKDLQGFRTQAPVEAAAAAQSYRQTLSWLPVTAETQPLMQQWLTAHPDDTALKEHMLHPPGGPPDKAGLARQAGFQQLNSGRLSAAEQSFQSALQINSHDADSLGGMGLVSMRQGDAAEARRYFQEAMAADPKTADRWRPALAGMEISGDYAAVRQLIAAHQYTEAKQRLTSLARQPGQFTGATLMLADLQRTTGQIDASEQEYRSVLARDPNNQLALMGLARVDMAQGNTAEARQLLSRVGPQYATEVGEIEVTGLMAAASHTSDSARKVAILREAMTQAPRDPWVRINLANALQQQGDVAEAGRVMQPILANPVTAQDRQAGILYTYGAGNDAATRRLLSGLSPEDYSPAIRSIAEEMQIKEDLASRLSMVPNPVPLIREALAPPDPTGARGVAVADLFRQRGDMIHARMALRIASTRTIDLSPDQRLAYATEYMKISNPVAAARLLAPLGDGSGSGAGNALLPEQQQTLQQLRMGIAVAQSDLLNQRGDQAQAYDHLAPALRADPEATSPKLALARLYNGEGKSSKALDIDLAVLRHNPQDLDARQAAVQAAVNSGRKSLATHLAMDGVQESPMDARAWLGMAVADQADGHGHRTIADLRRAYDLRLQQVEGSRSASGPAATEEDALAPPSSNPFRHHGYGRQTELGAPVTGGSYSMEATSPEAADQMLSSISGQINTLRENLAPSIDGGLGFRSRSGEHGMGRLTEANIPIVGRLPLQAGESSLTFSITPTMIWSGDLNAGSVYDVPRYGTNMATEAYNQYVNSLSQNNSSSSLRTQQIQGGQGEAGFAPDVQFSNSWVRADVGASPIGFPITNVLGGVEFSPRVGPVTFRVSAERRSITNSVLSYGGLRDPNYNSALGRYALNHYGSQLASQWGQEWGGVVTNHFHGQVEATLGNTILYGGGGYAIQTGKNTRSNNEREAGIGANTLVWHNANMLVRIGVSLTYFGYANNQDFYTYGQGGYFSPQSYYSATVPIRYAGQHKRLDWDVTGSVGYQVFHEHSSPFFPTSSLLQSGAQYIADSYMQNATASDYLSEETVDRAYYPGDSIASLTGGFNARVGYRFTHNLRLDLSGRWQKAGNWTESGAMISVHYLIMDQ.

Residues 1–30 (MNRRYVFSLSAGLLASSCMGAIMPVPVARA) form the signal peptide. 8 TPR repeats span residues 50–83 (RQIL…APDA), 85–117 (DVLE…APGS), 292–325 (AGLA…NSHD), 326–359 (ADSL…DPKT), 406–439 (TGAT…DPNN), 558–591 (NDAA…KEDL), 702–735 (MGIA…DPEA), and 737–769 (SPKL…NPQD). Residues 838–886 (VEGSRSASGPAATEEDALAPPSSNPFRHHGYGRQTELGAPVTGGSYSME) are disordered.

Belongs to the AcsC/BcsC family.

It localises to the cell outer membrane. Its pathway is glycan metabolism; bacterial cellulose biosynthesis. In terms of biological role, required for maximal bacterial cellulose synthesis. It may be involved in the formation of a membrane complex for extrusion of the cellulose product. In Komagataeibacter xylinus (Gluconacetobacter xylinus), this protein is Cellulose synthase 1 operon protein C (bcsCI).